We begin with the raw amino-acid sequence, 320 residues long: RNA polymerase sigma factor SigA2 (320 aa).

A sigma-70 factor domain-2 region spans residues 89–159 (MIEANLRLVV…TRAIAQQSRT (71 aa)). Residues 113-116 (DLIQ) carry the Interaction with polymerase core subunit RpoC motif. Residues 168–243 (EKLNKLKKTQ…EDEQSSPSDY (76 aa)) are sigma-70 factor domain-3. The interval 256–310 (LMAELTPQQQAVIALRYGLDEGDSLSLAKVGERLNISRERVRKLERQAMDHLRRR) is sigma-70 factor domain-4. Positions 282–301 (LAKVGERLNISRERVRKLER) form a DNA-binding region, H-T-H motif.

This sequence belongs to the sigma-70 factor family.

The protein localises to the cytoplasm. Sigma factors are initiation factors that promote the attachment of RNA polymerase to specific initiation sites and are then released. This sigma factor is a component of the biological clock pathway that affects the circadian expression of a subset of genes in this bacterium. In Synechococcus elongatus (strain ATCC 33912 / PCC 7942 / FACHB-805) (Anacystis nidulans R2), this protein is RNA polymerase sigma factor SigA2 (sigA2).